A 148-amino-acid polypeptide reads, in one-letter code: Deoxyuridine 5'-triphosphate nucleotidohydrolase (148 aa).

Substrate contacts are provided by residues 65–67 (RSG), N78, 82–84 (TID), and K92.

Belongs to the dUTPase family. Mg(2+) serves as cofactor.

It catalyses the reaction dUTP + H2O = dUMP + diphosphate + H(+). It functions in the pathway pyrimidine metabolism; dUMP biosynthesis; dUMP from dCTP (dUTP route): step 2/2. Its function is as follows. This enzyme is involved in nucleotide metabolism: it produces dUMP, the immediate precursor of thymidine nucleotides and it decreases the intracellular concentration of dUTP so that uracil cannot be incorporated into DNA. The protein is Deoxyuridine 5'-triphosphate nucleotidohydrolase of Chlorobium phaeovibrioides (strain DSM 265 / 1930) (Prosthecochloris vibrioformis (strain DSM 265)).